The primary structure comprises 638 residues: MQRICPAHCSVTHSLTMKSMRLSYIPPAASAAPQSPSYGRKKNASAAPPSAAASTTVLTSPLVTTTRTPKQTEQEDEQLVAKTKTTRTVIATTNGRAAPSQSRPRRRPAPAAAASAASLPMTFCNALEEVINTFIDPPALRPAVDPRNVLTSNFVPVDELPPTPCPVVRGAIPRCLAGGAYIRNGPNPQHLPRGPHHLFDGDGMLHSLLLPSPASSGDDPVLCSRYVQTYKYLVERDAGAPVLPNVFSGFHGVAGMARGAVVAARVLTGQMNPLEGVGLANTSLAYFAGRLYALGESDLPYAVRVHPDTGEVTTHGRCDFGGRLVMGMTAHPKKDPVTGELFAFRYGPVPPFVTYFRFDPAGNKGADVPIFSVQQPSFLHDFAITERYAIFPEIQIVMKPMDMVVGGGSPVGSDPGKVPRLGVIPRYATDESEMRWFEVPGFNIMHSVNAWEEAGGEELVLVAPNVLSIEHALEHMELVHSCVEKVRINLRTGVVTRTPLAAGNFDFPVINPAFLGRRNRYGYFGVGDPAPKIGGVAKLDFDRAGEGDCTVAQRDFGPGCFAGEPFFVADDVEGNGNEDDGYLVCYVHDEATGENRFVVMDARSPDLEIVAEVQLPGRVPYGFHGLFVTQAELQSQHQ.

The transit peptide at 1–80 directs the protein to the chloroplast; that stretch reads MQRICPAHCS…QTEQEDEQLV (80 aa). Composition is skewed to low complexity over residues 28-37, 44-69, and 92-102; these read AASAAPQSPS, ASAA…TRTP, and TTNGRAAPSQS. Disordered regions lie at residues 28–80 and 92–113; these read AASA…EQLV and TTNG…PAAA. Positions 331, 380, 446, and 624 each coordinate Fe cation.

It belongs to the carotenoid oxygenase family. Requires Fe(2+) as cofactor.

Its subcellular location is the plastid. It localises to the chloroplast. It carries out the reaction a 9-cis-epoxycarotenoid + O2 = a 12'-apo-carotenal + 2-cis,4-trans-xanthoxin. It catalyses the reaction 9-cis-violaxanthin + O2 = (3S,5R,6S)-5,6-epoxy-3-hydroxy-5,6-dihydro-12'-apo-beta-caroten-12'-al + 2-cis,4-trans-xanthoxin. The enzyme catalyses 9'-cis-neoxanthin + O2 = (3S,5R,6R)-3,5-dihydroxy-6,7-didehydro-5,6-dihydro-12'-apo-beta-caroten-12'-al + 2-cis,4-trans-xanthoxin. In terms of biological role, has a 11,12(11',12') 9-cis epoxycarotenoid cleavage activity. Catalyzes the first step of abscisic-acid biosynthesis from carotenoids. This Oryza sativa subsp. japonica (Rice) protein is 9-cis-epoxycarotenoid dioxygenase NCED1, chloroplastic.